The sequence spans 372 residues: MPLSDFHVSEPFTLGIELEMQVVNPPGYDLSQDSSMLIDAVKNEITAGEVKHDITESMLELATDVCRDINQAAGQFSAMQKVVLQAAADHHLEICGGGTHPFQKWQRQEVCDNERYQRTLENFGYPIQQATVFGQHVHVGCASGDDAIYLLHGLSRFVPHFIALSAASPYMQGTDTRFASSRPNIFSAFPDNGPMPWVSNWQQFEALFRCLSYTTMIDSIKDLHWDIRPSPHFGTVEVRVMDTPLTLSHAVNMAGLIQATAHWLLTERPFKHQEKDYLLYKFNRFQACRYGLEGVITDPYTGDRRPLTEDTLRLLEKIAPSAHKIAASSAIEALHRQVVSGLNEAQLMRDFVADGGSLIGLVKKHCEIWAGD.

This sequence belongs to the glutamate--cysteine ligase type 2 family. YbdK subfamily. Homodimer.

It carries out the reaction L-cysteine + L-glutamate + ATP = gamma-L-glutamyl-L-cysteine + ADP + phosphate + H(+). Its function is as follows. ATP-dependent carboxylate-amine ligase which exhibits weak glutamate--cysteine ligase activity. In Shigella dysenteriae serotype 1 (strain Sd197), this protein is Putative glutamate--cysteine ligase 2 (ybdK).